Here is a 237-residue protein sequence, read N- to C-terminus: Uracil-DNA glycosylase (237 aa).

D77 serves as the catalytic Proton acceptor.

The protein belongs to the uracil-DNA glycosylase (UDG) superfamily. UNG family.

It localises to the cytoplasm. The enzyme catalyses Hydrolyzes single-stranded DNA or mismatched double-stranded DNA and polynucleotides, releasing free uracil.. Functionally, excises uracil residues from the DNA which can arise as a result of misincorporation of dUMP residues by DNA polymerase or due to deamination of cytosine. The chain is Uracil-DNA glycosylase from Acinetobacter baumannii (strain ACICU).